The primary structure comprises 274 residues: Penicillin-insensitive murein endopeptidase (274 aa).

The signal sequence occupies residues 1 to 19 (MKKTAIALLAWFVSSASLA). 3 disulfide bridges follow: Cys-44-Cys-265, Cys-187-Cys-235, and Cys-216-Cys-223. 6 residues coordinate Zn(2+): His-110, His-113, Asp-120, Asp-147, His-150, and His-211. Residues 225–274 (DQPLPPPGDGCGAELQSWFEPPKPGTTKPEKKTPPPLPPSCQALLDEHVL) form a disordered region.

Belongs to the peptidase M74 family. As to quaternary structure, dimer. Zn(2+) serves as cofactor.

It is found in the periplasm. Its function is as follows. Murein endopeptidase that cleaves the D-alanyl-meso-2,6-diamino-pimelyl amide bond that connects peptidoglycan strands. Likely plays a role in the removal of murein from the sacculus. The protein is Penicillin-insensitive murein endopeptidase of Salmonella arizonae (strain ATCC BAA-731 / CDC346-86 / RSK2980).